Reading from the N-terminus, the 510-residue chain is Tryptophan 6-hydroxylase fscE (510 aa).

A helical transmembrane segment spans residues 11–31 (LLPIEGVIILVFVLSCFSLAI). Residue Cys452 coordinates heme.

Belongs to the cytochrome P450 family. The cofactor is heme.

The protein localises to the membrane. Its pathway is secondary metabolite biosynthesis. Functionally, tryptophan 6-hydroxylase; part of the fragmented gene cluster that mediates the biosynthesis of fusarochromene, a tryptophan-derived metabolite closely related to a group of mycotoxins including fusarochromanone. Within the pathway, fscE hydroxalates the first intermediate D-tryptophan to yield 6-hydroxytryptophan. The first step of the pathway is the epimerization of L-tryptophan to D-tryptophan in the presence of the NRPS-like tryptophan epimerase fscC. D-tryptophan is subsequently hydroxylated by the tryptophan 6-hydroxylase fscE to yield 6-hydroxytryptophan. The pyrrole ring undergoes cleavaged by the tryptophan 2,3-dioxygenase fscD and is finally converted to 4-hydroxykyrunenine by the hydrolase fscH. The NRPS-like oxidoreductase fscA reduces the carboxyl group to primary alcohol and the DMATS-type prenyltransferase fscG performs prenylation, followed by the formation of a chromene ring catalyzed by the oxidoreductase fscI, which leads to desacetylfusarochromene. Epoxidation by fscF and rearrangement reactions of chromene double bonds convert compound desacetylfusarochromene to fusarochromanones. Although specific acetyltransferases were not found near the fsc gene cluster, several predicted enzymes containing the N-acetyltransferase superfamily domain are present in the genome of F.equiseti. These predicted enzymes may have the potential to convert desacetylfusarochromene to fusarochromene. The polypeptide is Tryptophan 6-hydroxylase fscE (Fusarium equiseti (Fusarium scirpi)).